The primary structure comprises 207 residues: ATP-dependent Clp protease proteolytic subunit (207 aa).

The propeptide occupies 1 to 14 (MSYSGERDNLAPHM). Residue Ser-111 is the Nucleophile of the active site. Residue His-136 is part of the active site.

This sequence belongs to the peptidase S14 family. As to quaternary structure, fourteen ClpP subunits assemble into 2 heptameric rings which stack back to back to give a disk-like structure with a central cavity, resembling the structure of eukaryotic proteasomes. Component of the ClpAP and ClpXP complexes.

Its subcellular location is the cytoplasm. It carries out the reaction Hydrolysis of proteins to small peptides in the presence of ATP and magnesium. alpha-casein is the usual test substrate. In the absence of ATP, only oligopeptides shorter than five residues are hydrolyzed (such as succinyl-Leu-Tyr-|-NHMec, and Leu-Tyr-Leu-|-Tyr-Trp, in which cleavage of the -Tyr-|-Leu- and -Tyr-|-Trp bonds also occurs).. Functionally, cleaves peptides in various proteins in a process that requires ATP hydrolysis. Has a chymotrypsin-like activity. Plays a major role in the degradation of misfolded proteins. The sequence is that of ATP-dependent Clp protease proteolytic subunit from Salmonella paratyphi A (strain ATCC 9150 / SARB42).